The sequence spans 316 residues: MGVRAQPLLARSLITTTQPWILSARSKPSSLLSQPWNKTVHNQAHVAEQPTDPANMEKLVGRHHPLPIRSEFVGSTPIDTATLEKIEVGAGLHRIPVSISDWTAYGIVRFLRFFADLFFRKQYVHRAVVLETVAAVPGMVAGMLRHLTSLRLMRHDGGWISHLLSEAENERLHLLTWMKVCQPSLFERMLVALVQTLFFNVYFLAYMLFPKTAHRMVGYLEEEAIISYTHFLAEIDAGNIPNGPAPKLAIDYWNLKEDATVRDVVLAVRADEANHRDMNHHFADRIVIHQEDLRHMVTADSLKPIVKLSKVDIKSD.

The N-terminal 26 residues, 1–26, are a transit peptide targeting the mitochondrion; it reads MGVRAQPLLARSLITTTQPWILSARS. The chain crosses the membrane as a helical span at residues 124–144; sequence VHRAVVLETVAAVPGMVAGML. Residues Glu-131, Glu-170, and His-173 each coordinate Fe cation. Residues 189–209 traverse the membrane as a helical segment; the sequence is MLVALVQTLFFNVYFLAYMLF. The Fe cation site is built by Glu-221, Glu-272, and His-275.

It belongs to the alternative oxidase family. Fe cation serves as cofactor.

The protein resides in the mitochondrion inner membrane. It catalyses the reaction 2 a ubiquinol + O2 = 2 a ubiquinone + 2 H2O. Alternative oxidase which function may be to reoxidize reducing equivalents produced by glycolysis such as ubiquinol. The sequence is that of Ubiquinol oxidase, mitochondrial (AOX) from Batrachochytrium dendrobatidis (strain JAM81 / FGSC 10211) (Frog chytrid fungus).